Here is a 154-residue protein sequence, read N- to C-terminus: Anaerobic ribonucleoside-triphosphate reductase-activating protein (154 aa).

3 residues coordinate [4Fe-4S] cluster: Cys-26, Cys-30, and Cys-33. Residues 32–34 and Gly-74 contribute to the S-adenosyl-L-methionine site; that span reads GCY.

Belongs to the organic radical-activating enzymes family. Forms a tetramer composed of two NrdD and two NrdG subunits. [4Fe-4S] cluster serves as cofactor.

It localises to the cytoplasm. It catalyses the reaction glycyl-[protein] + reduced [flavodoxin] + S-adenosyl-L-methionine = glycin-2-yl radical-[protein] + semiquinone [flavodoxin] + 5'-deoxyadenosine + L-methionine + H(+). In terms of biological role, activation of anaerobic ribonucleoside-triphosphate reductase under anaerobic conditions by generation of an organic free radical, using S-adenosylmethionine and reduced flavodoxin as cosubstrates to produce 5'-deoxy-adenosine. This Salmonella typhi protein is Anaerobic ribonucleoside-triphosphate reductase-activating protein (nrdG).